The sequence spans 323 residues: Elongation factor P--(R)-beta-lysine ligase (323 aa).

74–76 (SPE) is a substrate binding site. ATP is bound by residues 98 to 100 (RNE) and Asn107. Residue Tyr116 participates in substrate binding. Position 242 to 243 (242 to 243 (EL)) interacts with ATP. Glu249 contributes to the substrate binding site. Gly298 lines the ATP pocket.

Belongs to the class-II aminoacyl-tRNA synthetase family. EpmA subfamily. As to quaternary structure, homodimer.

It carries out the reaction D-beta-lysine + L-lysyl-[protein] + ATP = N(6)-((3R)-3,6-diaminohexanoyl)-L-lysyl-[protein] + AMP + diphosphate + H(+). With EpmB is involved in the beta-lysylation step of the post-translational modification of translation elongation factor P (EF-P). Catalyzes the ATP-dependent activation of (R)-beta-lysine produced by EpmB, forming a lysyl-adenylate, from which the beta-lysyl moiety is then transferred to the epsilon-amino group of a conserved specific lysine residue in EF-P. This chain is Elongation factor P--(R)-beta-lysine ligase, found in Photobacterium profundum (strain SS9).